The primary structure comprises 353 residues: (S)-8-amino-7-oxononanoate synthase BioU (353 aa).

Position 10–14 (10–14 (GTGGI)) interacts with NAD(+). The active-site Nucleophile is the lysine 147. Residue lysine 147 is modified to Allysine. Residue 214 to 215 (GT) participates in NAD(+) binding. The active-site Proton acceptor is the glutamate 218. Histidine 222 acts as the Proton donor and proton acceptor in catalysis.

It belongs to the BioU family. As to quaternary structure, monomer.

The enzyme catalyses (8S)-8-amino-7-oxononanoate + L-lysyl-[protein] + CO2 = (S)-2-amino-6-oxohexanoyl-[protein] + (7R,8S)-8-amino-7-(carboxyamino)nonanoate + 2 H(+). It carries out the reaction (8S)-8-amino-7-oxononanoate + L-lysyl-[protein] + NADPH + H(+) = N(6)-[(2S,3R)-2-amino-8-carboxyoctan-3-yl]-L-lysyl-[protein] + NADP(+) + H2O. It catalyses the reaction N(6)-[(2S,3R)-2-amino-8-carboxyoctan-3-yl]-L-lysyl-[protein] + CO2 + NADP(+) + H2O = (S)-2-amino-6-oxohexanoyl-[protein] + (7R,8S)-8-amino-7-(carboxyamino)nonanoate + NADPH + 3 H(+). The catalysed reaction is (8S)-8-amino-7-oxononanoate + L-lysyl-[protein] + NADH + H(+) = N(6)-[(2S,3R)-2-amino-8-carboxyoctan-3-yl]-L-lysyl-[protein] + NAD(+) + H2O. The enzyme catalyses N(6)-[(2S,3R)-2-amino-8-carboxyoctan-3-yl]-L-lysyl-[protein] + CO2 + NAD(+) + H2O = (S)-2-amino-6-oxohexanoyl-[protein] + (7R,8S)-8-amino-7-(carboxyamino)nonanoate + NADH + 3 H(+). It functions in the pathway cofactor biosynthesis; biotin biosynthesis. In terms of biological role, a 'suicide' enzyme that participates in biotin synthesis. Catalyzes the formation of (S)-8-amino-7-oxononanoate (DAN-carbamic acid) from (7R,8S)-8-amino-7-(carboxyamino)nonanoate (DAN), a function equivalent to the cannonical BioA reaction and the first half-reaction of BioD. The cellular requirement for biotin is thought be low enough that this single turnover enzyme supplies a sufficient amount of the cofactor. Overall it catalyzes three reactions: formation of a covalent linkage with 8-amino-7-oxononanoate to yield a BioU-DAN conjugate at the epsilon-amino group of Lys124 of BioU using NAD(P)H, carboxylation of the conjugate to form BioU-DAN-carbamic acid, and release of DAN-carbamic acid using NAD(P)+. Complements a bioA deletion in E.coli. The chain is (S)-8-amino-7-oxononanoate synthase BioU from Haloferax mediterranei (strain ATCC 33500 / DSM 1411 / JCM 8866 / NBRC 14739 / NCIMB 2177 / R-4) (Halobacterium mediterranei).